The following is a 409-amino-acid chain: Probable ATP-dependent RNA helicase MG308 homolog (409 aa).

The region spanning Val-26 to Val-179 is the Helicase ATP-binding domain. Position 39–46 (Ala-39–Thr-46) interacts with ATP. The DEVD box signature appears at Asp-126 to Asp-129. The region spanning Leu-190–Leu-349 is the Helicase C-terminal domain.

This sequence belongs to the DEAD box helicase family.

It catalyses the reaction ATP + H2O = ADP + phosphate + H(+). This Mycoplasma pneumoniae (strain ATCC 29342 / M129 / Subtype 1) (Mycoplasmoides pneumoniae) protein is Probable ATP-dependent RNA helicase MG308 homolog.